The sequence spans 142 residues: Large ribosomal subunit protein uL11 (142 aa).

The protein belongs to the universal ribosomal protein uL11 family. As to quaternary structure, part of the ribosomal stalk of the 50S ribosomal subunit. Interacts with L10 and the large rRNA to form the base of the stalk. L10 forms an elongated spine to which L12 dimers bind in a sequential fashion forming a multimeric L10(L12)X complex. Post-translationally, one or more lysine residues are methylated.

In terms of biological role, forms part of the ribosomal stalk which helps the ribosome interact with GTP-bound translation factors. In Solibacter usitatus (strain Ellin6076), this protein is Large ribosomal subunit protein uL11.